Consider the following 164-residue polypeptide: 17.8 kDa heat shock protein (164 aa).

In terms of domain architecture, sHSP spans 20-154 (VVAGEARPPM…HAGNGKAAGD (135 aa)). The disordered stretch occupies residues 68 to 93 (GEHEDANNAAKAGKASGEEEEENDGV).

The protein belongs to the small heat shock protein (HSP20) family. In terms of assembly, may form oligomeric structures.

Its subcellular location is the cytoplasm. The polypeptide is 17.8 kDa heat shock protein (HSP17.8) (Oryza sativa subsp. japonica (Rice)).